The following is a 135-amino-acid chain: Sex-regulated protein janus-A (135 aa).

Residue Lys37 coordinates substrate. The Proton acceptor role is filled by His63. 104-106 (SQG) serves as a coordination point for substrate.

It belongs to the janus family. As to expression, somatic and germline cells. Isoform B is expressed in both sexes and in somatic and germ line cells. Isoform A is expressed in males and is germ line specific.

Its function is as follows. JanA and janB regulate somatic sex differentiation. The protein is Sex-regulated protein janus-A (janA) of Drosophila melanogaster (Fruit fly).